Here is a 1335-residue protein sequence, read N- to C-terminus: MSIEAVFDQVTDPSLRAVIQEEAHKQIKDLFKETTRCNPYSIPQAGRKVLEKYAIPYNPYSLKLHPHAASKAFEVSLYEAASNYLPSTSSTPVTFMFTKPGKLRFFRRRGHVDKFVNADIVPRDLARYPRDTVYSYLPEITTTHAFIGDTLHHFGEDFLVEVFSRSPKLEVLLATMVLPPEAFYRMESLHPSVYTLLYRDDRFLYLPGGLSGGEYEHRYKDLNWLTFGTVTHGGITITGERIETKAANHLFLFRRGRLATPKFRSFDMPEPMVLLPKVFRPAKYNVQKPIPREKANKWLMYVKSIGNATIRDVWAKLRQTIANADIGLFSPTELVHLTNYFLLLGRLDSHNSFDQVLADSVLKAWFRPMVAKLQEIKHKLMGQTQFMQLCQALEMTEVDLVFEVRDSKTPHKQAVPLDREIENVLLEGVSSEPTYTETEGVADGPLPPPMQTAAEPSATSDEPESSSSREIEHQPAPEITLDEEEPQRDDLPWDAWRTQLRALGFEASERQYDPDGELISPILSTRRLPKTPIDTTLYATLDKIARCPTFYKPDTDRAQTYARDVMAGKTGAILKQQPFEWKTTLKRKTKEEPKEIHLAVLHGAGGSGKSYALQEFMRNNSDTPITVILPTNELRADWKKKLPAHDKDTFMTYENALLCPRGDIFIMDDYTKLPRGYIEAFVQNAPALSLLILTGDPNQAEHFETTEDNEINSLAPASVVFGKFSRYHINATHRNPRNLANALGVYSETPGEVKVLYTRNIKTGYHNLVPSQMKMRNYASLGQRASTYAGCQGITAPRVQIILDSDTPRCTRQVMYTALSRATTEVVLCNTMPDEKSFFQKVEATPYLKAILNLNKEIKVTEGDLTEEPPREPAPPTTHLPVENRIILNEALVEPLPDKHDREIYSNSTGFSNCIQTQDPYIQAFQHQQAKDETLFWATVEKRLAASTPKDNWTEFKTKRPLGDVLWLAYKRAMVLPDEPIKFNPELWWACADEVQKTYLSKPIHALKNGILRQSPDFDWNKLQIFLKSQWVKKIDKIGKIDVNAGQTIAAFYQPTVMLFGTMARYMRRIRDTYQPGEILINCEKNQKHISKWVESNWNHRLPAYTNDFTAYDQSQDGAMLQFEVLKALHHDIPHEVVEAYVALKLNSKMFLGTLAIMRLTGEGPTFDANTECNIAYTHARFEIPKNVAQMYAGDDCALNCRPVERQSFLPLVEKFTLKSKPKVFEQKVGSWPEFCGNLITPRGYLKDPMKLQHCLQLAQRKKPSEPGSLKDVAENYAMDLLPTYELGDALYEIFDERQMNAHYQSVRTLITCAHTKVLRVAQALQEDCTFFSSI.

An Alphavirus-like MT domain is found at N58–L225. The tract at residues G428–P492 is disordered. Positions A453–S466 are enriched in low complexity. The 166-residue stretch at D564 to I729 folds into the (+)RNA virus helicase ATP-binding domain. G603–S610 is a binding site for ATP. Positions N730–G863 constitute a (+)RNA virus helicase C-terminal domain. In terms of domain architecture, RdRp catalytic spans L1102–F1209.

Belongs to the potexviruses/carlaviruses RNA replication protein family.

It catalyses the reaction RNA(n) + a ribonucleoside 5'-triphosphate = RNA(n+1) + diphosphate. The catalysed reaction is ATP + H2O = ADP + phosphate + H(+). Its function is as follows. RNA replication. The central part of this protein possibly functions as an ATP-binding helicase. The protein is RNA replication protein of Foxtail mosaic virus.